A 492-amino-acid chain; its full sequence is Beclin 1-associated autophagy-related key regulator (492 aa).

Residue Ser29 is modified to Phosphoserine. The cysteine repeats stretch occupies residues 43–58 (CPLCNTTRRRLTCAKC). The stretch at 71–180 (DRERFIDKKE…KLGDLVEKKT (110 aa)) forms a coiled coil. The tract at residues 410–473 (PGVAGESDES…PIASSSAGGM (64 aa)) is disordered. Positions 413–492 (AGESDESGDE…SWFKAYTGHR (80 aa)) are BATS. The segment covering 415–433 (ESDESGDERVSDEETDLGT) has biased composition (acidic residues). Ser416 carries the phosphoserine modification. Thr429 carries the phosphothreonine modification. Low complexity predominate over residues 448–473 (SQSVEVSQSQSTQASPPIASSSAGGM).

The protein belongs to the ATG14 family. Forms homooligomers; homo-oligomerization is essential for the roles in membrane tethering and enhancement of SNARE-mediated fusion. Component of the PI3K (PI3KC3/PI3K-III/class III phosphatidylinositol 3-kinase) complex I (PI3KC3-C1) in which the core composed of the catalytic subunit PIK3C3, the regulatory subunit PIK3R4 and BECN1 is associated with ATG14. PI3KC3-C1 displays a V-shaped architecture with PIK3R4 serving as a bridge between PIK3C3 and the ATG14:BECN1 subcomplex. PI3KC3-C1 can associate with further regulatory subunits. Interacts with PIK3CB. Interacts (via coiled-coil domain) with BECN2 (via coiled-coil domain); this interaction is tighter than BECN2 self-association. Interacts with the STX17-SNAP29 binary t-SNARE complex. Interacts with NRBF2. Interacts with PIK3C3 and BECN1; this interaction is increased in the absence of TMEM39A. Interacts with STEEP1; the interaction is required for trafficking of STING1 from the endoplasmic reticulum. Interacts with ARMC3 (via ARM domains). Post-translationally, ubiquitinated via 'Lys-6', 'Lys-11' and 'Lys-63'-linked polyubiquitin chains on multiple lysines by MARCHF7, leading to ATG14 aggregation and loss of interaction with STX17.

It localises to the cytoplasm. Its subcellular location is the endoplasmic reticulum membrane. The protein resides in the preautophagosomal structure membrane. The protein localises to the cytoplasmic vesicle. It is found in the autophagosome membrane. Required for both basal and inducible autophagy. Determines the localization of the autophagy-specific PI3-kinase complex PI3KC3-C1. Plays a role in autophagosome formation and MAP1LC3/LC3 conjugation to phosphatidylethanolamine. Promotes BECN1 translocation from the trans-Golgi network to autophagosomes. Enhances PIK3C3 activity in a BECN1-dependent manner. Essential for the autophagy-dependent phosphorylation of BECN1. Stimulates the phosphorylation of BECN1, but suppresses the phosphorylation PIK3C3 by AMPK. Binds to STX17-SNAP29 binary t-SNARE complex on autophagosomes and primes it for VAMP8 interaction to promote autophagosome-endolysosome fusion. Modulates the hepatic lipid metabolism. This Homo sapiens (Human) protein is Beclin 1-associated autophagy-related key regulator.